A 423-amino-acid chain; its full sequence is MDIDQYMTDVGRRARRASREIARASTAAKNAALEAVARAIGRDADALKAANARDVARAKDKGHDAAFVDRLTLSDKALKTMIEGLRQVATLADPIGEMSNLKYRPSGIQVGQMRVPLGVIGIIYESRPNVTIDAAALCLKSGNATILRGGSEALESNTALAKLIGEGLAAAGLSQDAVQVVGTADRAAVGKLITMTEYVDVIVPRGGKSLIERLINEARVPMIKHLDGICHVYVDDRASVAKALAVCDNAKTHRYGTCNTMETLLVARGIAPAVLTPLGRLYREKGVELRVDADARAVLEAAGVGPLVDATDEDWRTEYLAPVLAIKIVDGIDAAIEHINEYGSHHTDAIVTEDHDRAMRFLREVDSASVMVNASTRFADGFEFGLGAEIGISNDKLHARGPVGLEGLTSLKYVVLGHGEGRE.

The protein belongs to the gamma-glutamyl phosphate reductase family.

The protein localises to the cytoplasm. The catalysed reaction is L-glutamate 5-semialdehyde + phosphate + NADP(+) = L-glutamyl 5-phosphate + NADPH + H(+). Its pathway is amino-acid biosynthesis; L-proline biosynthesis; L-glutamate 5-semialdehyde from L-glutamate: step 2/2. In terms of biological role, catalyzes the NADPH-dependent reduction of L-glutamate 5-phosphate into L-glutamate 5-semialdehyde and phosphate. The product spontaneously undergoes cyclization to form 1-pyrroline-5-carboxylate. This Burkholderia pseudomallei (strain 1710b) protein is Gamma-glutamyl phosphate reductase.